The chain runs to 444 residues: Phosphoglucosamine mutase (444 aa).

The Phosphoserine intermediate role is filled by Ser102. Mg(2+) is bound by residues Ser102, Asp241, Asp243, and Asp245. Ser102 bears the Phosphoserine mark.

Belongs to the phosphohexose mutase family. Mg(2+) serves as cofactor. Activated by phosphorylation.

The catalysed reaction is alpha-D-glucosamine 1-phosphate = D-glucosamine 6-phosphate. Its function is as follows. Catalyzes the conversion of glucosamine-6-phosphate to glucosamine-1-phosphate. This is Phosphoglucosamine mutase from Erwinia tasmaniensis (strain DSM 17950 / CFBP 7177 / CIP 109463 / NCPPB 4357 / Et1/99).